The following is a 97-amino-acid chain: Co-chaperonin GroES (97 aa).

The protein belongs to the GroES chaperonin family. As to quaternary structure, heptamer of 7 subunits arranged in a ring. Interacts with the chaperonin GroEL.

The protein resides in the cytoplasm. Its function is as follows. Together with the chaperonin GroEL, plays an essential role in assisting protein folding. The GroEL-GroES system forms a nano-cage that allows encapsulation of the non-native substrate proteins and provides a physical environment optimized to promote and accelerate protein folding. GroES binds to the apical surface of the GroEL ring, thereby capping the opening of the GroEL channel. The sequence is that of Co-chaperonin GroES from Pseudomonas fluorescens (strain ATCC BAA-477 / NRRL B-23932 / Pf-5).